Consider the following 266-residue polypeptide: MKAALLTLAVLFLTGSQARHFWQQDEPQSPWDRVKDLATVYVDAVKDSGRDYVAQFEASALGKQLNLKLLDNWDSLSSTVTKLREQIGPVTQEFWDNLEKETEVLRQEMSKDLEEVKQKVQPYLDDFQKKWQEEVELYRQKVAPLGSELREGARQKLQELQEKLSPLAEELRDRARTHVDALRAQLAPYSDDLRERLAARLEALKEGGGASLAEYHARASEQLSALGEKARPALEDLRQGLLPVLESFKVSLLAAIDEATKKLNAQ.

The signal sequence occupies residues 1 to 18 (MKAALLTLAVLFLTGSQA). Tandem repeats lie at residues 67–88 (LKLLDNWDSLSSTVTKLREQIG) and 89–110 (PVTQEFWDNLEKETEVLRQEMS). A 10 X approximate tandem repeats region spans residues 67-266 (LKLLDNWDSL…DEATKKLNAQ (200 aa)). Methionine sulfoxide is present on methionine 109. Residues 111 to 121 (KDLEEVKQKVQ) form a 3; half-length repeat. Repeat copies occupy residues 122–143 (PYLDDFQKKWQEEVELYRQKVA), 144–165 (PLGSELREGARQKLQELQEKLS), 166–187 (PLAEELRDRARTHVDALRAQLA), 188–209 (PYSDDLRERLAARLEALKEGGG), and 210–231 (ASLAEYHARASEQLSALGEKAR). One copy of the 9; half-length repeat lies at 232–242 (PALEDLRQGLL). Repeat unit 10 spans residues 243 to 266 (PVLESFKVSLLAAIDEATKKLNAQ).

The protein belongs to the apolipoprotein A1/A4/E family. As to quaternary structure, homodimer. Interacts with APOA1BP and CLU. Component of a sperm activating protein complex (SPAP), consisting of APOA1, an immunoglobulin heavy chain, an immunoglobulin light chain and albumin. Interacts with NDRG1. Interacts with SCGB3A2. Interacts with NAXE and YJEFN3. In terms of processing, palmitoylated. Glycosylated. Post-translationally, phosphorylation sites are present in the extracellular medium. In terms of tissue distribution, major protein of plasma HDL, also found in chylomicrons. Synthesized in the liver and small intestine.

It localises to the secreted. In terms of biological role, participates in the reverse transport of cholesterol from tissues to the liver for excretion by promoting cholesterol efflux from tissues and by acting as a cofactor for the lecithin cholesterol acyltransferase (LCAT). As part of the SPAP complex, activates spermatozoa motility. This is Apolipoprotein A-I (APOA1) from Canis lupus familiaris (Dog).